A 603-amino-acid polypeptide reads, in one-letter code: NADH-ubiquinone oxidoreductase chain 5 (603 aa).

The next 16 helical transmembrane spans lie at 4-24 (FTTM…ATLI), 38-58 (TAIA…ICLG), 89-109 (FLPV…WYMA), 122-142 (LIFL…QLFI), 171-191 (AILY…WFLL), 211-233 (LPLL…HPWL), 241-261 (TPVS…FLLI), 273-293 (IQTL…ICAL), 301-320 (IVAF…IGIN), 325-347 (ALLH…GSII), 366-386 (MPLT…MPFL), 405-424 (NTWA…AYST), 457-477 (LMLG…PMSL), 488-508 (LAAL…NYLA), 524-544 (IMLG…SLLM), and 582-602 (GLIK…LLMI).

Belongs to the complex I subunit 5 family. As to quaternary structure, core subunit of respiratory chain NADH dehydrogenase (Complex I) which is composed of 45 different subunits.

The protein resides in the mitochondrion inner membrane. It carries out the reaction a ubiquinone + NADH + 5 H(+)(in) = a ubiquinol + NAD(+) + 4 H(+)(out). In terms of biological role, core subunit of the mitochondrial membrane respiratory chain NADH dehydrogenase (Complex I) which catalyzes electron transfer from NADH through the respiratory chain, using ubiquinone as an electron acceptor. Essential for the catalytic activity and assembly of complex I. This chain is NADH-ubiquinone oxidoreductase chain 5 (MT-ND5), found in Pongo abelii (Sumatran orangutan).